Here is a 326-residue protein sequence, read N- to C-terminus: Dehydrogenase/reductase SDR family protein 7-like (326 aa).

The Cytoplasmic portion of the chain corresponds to 1–17 (MKVQDMDKCAPSSDWNV). The helical; Signal-anchor for type II membrane protein transmembrane segment at 18–38 (LYWVLGTVLMPVALPLAIINI) threads the bilayer. Topologically, residues 39–326 (WQRFQAQKFR…KLENAEKKST (288 aa)) are peroxisomal. 57–81 (LITGASSGLGESLAHVFYRAGCRVI) is an NAD(+) binding site. Ser-193 provides a ligand contact to substrate. The active-site Proton acceptor is the Tyr-206.

This sequence belongs to the short-chain dehydrogenases/reductases (SDR) family.

Its subcellular location is the peroxisome membrane. Functionally, putative oxidoreductase. The polypeptide is Dehydrogenase/reductase SDR family protein 7-like (Drosophila melanogaster (Fruit fly)).